The chain runs to 197 residues: Putative phosphopantothenoylcysteine decarboxylase (197 aa).

FMN is bound by residues Phe52 and 102–105; that span reads SANT. Asn139 provides a ligand contact to substrate. Residue Cys174 is the Proton donor of the active site.

This sequence belongs to the HFCD (homooligomeric flavin containing Cys decarboxylase) superfamily. Homotrimer. FMN serves as cofactor.

It carries out the reaction N-[(R)-4-phosphopantothenoyl]-L-cysteine + H(+) = (R)-4'-phosphopantetheine + CO2. Its pathway is cofactor biosynthesis; coenzyme A biosynthesis; CoA from (R)-pantothenate: step 3/5. Its function is as follows. Necessary for the biosynthesis of coenzyme A. Catalyzes the decarboxylation of 4-phosphopantothenoylcysteine to form 4'-phosphopantotheine. This Dictyostelium discoideum (Social amoeba) protein is Putative phosphopantothenoylcysteine decarboxylase (ppcdc).